The chain runs to 427 residues: Glutamate-1-semialdehyde 2,1-aminomutase (427 aa).

Lysine 265 is modified (N6-(pyridoxal phosphate)lysine).

This sequence belongs to the class-III pyridoxal-phosphate-dependent aminotransferase family. HemL subfamily. Homodimer. Pyridoxal 5'-phosphate serves as cofactor.

The protein resides in the cytoplasm. It catalyses the reaction (S)-4-amino-5-oxopentanoate = 5-aminolevulinate. Its pathway is porphyrin-containing compound metabolism; protoporphyrin-IX biosynthesis; 5-aminolevulinate from L-glutamyl-tRNA(Glu): step 2/2. This chain is Glutamate-1-semialdehyde 2,1-aminomutase, found in Bordetella petrii (strain ATCC BAA-461 / DSM 12804 / CCUG 43448).